We begin with the raw amino-acid sequence, 271 residues long: Expansin-B1 (271 aa).

The first 24 residues, 1-24 (MQLFPVILPTLCVFLHLLISGSGS), serve as a signal peptide directing secretion. In terms of domain architecture, Expansin-like EG45 spans 58–169 (GGACGYGSLV…RRTACKYRGK (112 aa)). Cystine bridges form between Cys-61–Cys-90, Cys-93–Cys-164, and Cys-98–Cys-104. In terms of domain architecture, Expansin-like CBD spans 182–263 (YWLSLLIEYE…NWVPKATYTS (82 aa)). N-linked (GlcNAc...) asparagine glycosylation is present at Asn-242.

Belongs to the expansin family. Expansin B subfamily.

Its subcellular location is the secreted. The protein resides in the cell wall. It localises to the membrane. Functionally, may cause loosening and extension of plant cell walls by disrupting non-covalent bonding between cellulose microfibrils and matrix glucans. No enzymatic activity has been found. This is Expansin-B1 (EXPB1) from Arabidopsis thaliana (Mouse-ear cress).